The following is a 431-amino-acid chain: Tol-Pal system protein TolB (431 aa).

The signal sequence occupies residues Met-1–Ser-19.

This sequence belongs to the TolB family. In terms of assembly, the Tol-Pal system is composed of five core proteins: the inner membrane proteins TolA, TolQ and TolR, the periplasmic protein TolB and the outer membrane protein Pal. They form a network linking the inner and outer membranes and the peptidoglycan layer.

The protein resides in the periplasm. Part of the Tol-Pal system, which plays a role in outer membrane invagination during cell division and is important for maintaining outer membrane integrity. TolB occupies a key intermediary position in the Tol-Pal system because it communicates directly with both membrane-embedded components, Pal in the outer membrane and TolA in the inner membrane. The polypeptide is Tol-Pal system protein TolB (Wigglesworthia glossinidia brevipalpis).